A 530-amino-acid polypeptide reads, in one-letter code: Pancreatic secretory granule membrane major glycoprotein GP2 (530 aa).

Residues 1–21 (MVACDLLWLAAASCLLTLVFP) form the signal peptide. Asparagine 33 is a glycosylation site (N-linked (GlcNAc...) asparagine). 11 disulfide bridges follow: cysteine 41/cysteine 52, cysteine 56/cysteine 150, cysteine 78/cysteine 168, cysteine 100/cysteine 138, cysteine 106/cysteine 173, cysteine 131/cysteine 139, cysteine 183/cysteine 193, cysteine 187/cysteine 202, cysteine 204/cysteine 234, cysteine 222/cysteine 313, and cysteine 254/cysteine 277. Residues 54–74 (DPCQNHTVLNDPSRSTENTVS) form a D10C region. N-linked (GlcNAc...) asparagine glycosylation is found at asparagine 58 and asparagine 127. In terms of domain architecture, EGF-like spans 179-223 (APKKCEIACRPEEECVFQNNSWTCVCRQDLNVSDTLSLQPLLDCG). 2 N-linked (GlcNAc...) asparagine glycosylation sites follow: asparagine 197 and asparagine 209. Residues 221-314 (DCGANEIKVK…FLVNVNFQCA (94 aa)) are ZP-N. Residues 221–477 (DCGANEIKVK…PSCSTSRLRS (257 aa)) form the ZP domain. 2 N-linked (GlcNAc...) asparagine glycosylation sites follow: asparagine 284 and asparagine 320. The flexible ZP-N/ZP-C linker stretch occupies residues 315-338 (YPLDMNVSLQTALQPIVSSLNVDV). Positions 339–350 (GGAGEFTVTMAL) are internal hydrophobic patch (IHP). A ZP-C region spans residues 339 to 477 (GGAGEFTVTM…PSCSTSRLRS (139 aa)). 3 cysteine pairs are disulfide-bonded: cysteine 394–cysteine 454, cysteine 415–cysteine 470, and cysteine 459–cysteine 466. The interval 484–492 (LTRVLDIGP) is external hydrophobic patch (EHP). Asparagine 505 is lipidated: GPI-anchor amidated asparagine. The propeptide at 506–530 (GTPRNTGFLLAWPTFFLPVFLAWLF) is removed in mature form.

Interacts with SYCN. Interacts with bacterial adhesin fimH. Post-translationally, N-glycosylated. In terms of tissue distribution, expressed in pancreas.

The protein resides in the zymogen granule membrane. It localises to the secreted. It is found in the cell membrane. Its subcellular location is the apical cell membrane. The protein localises to the membrane raft. The protein resides in the endosome. Its function is as follows. Functions as an intestinal M-cell transcytotic receptor specific of type-I-piliated bacteria that participates in the mucosal immune response toward these bacteria. At the apical membrane of M-cells it binds fimH, a protein of the bacteria type I pilus tip. Internalizes bound bacteria, like E.coli and S.typhimurium, from the lumen of the intestine and delivers them, through M-cells, to the underlying organized lymphoid follicles where they are captured by antigen-presenting dendritic cells to elicit a mucosal immune response. The sequence is that of Pancreatic secretory granule membrane major glycoprotein GP2 from Rattus norvegicus (Rat).